Here is a 123-residue protein sequence, read N- to C-terminus: Small ribosomal subunit protein uS12cz/uS12cy (123 aa).

This sequence belongs to the universal ribosomal protein uS12 family. Part of the 30S ribosomal subunit.

It localises to the plastid. Its subcellular location is the chloroplast. With S4 and S5 plays an important role in translational accuracy. Located at the interface of the 30S and 50S subunits. The protein is Small ribosomal subunit protein uS12cz/uS12cy (rps12-A) of Arabis hirsuta (Hairy rock-cress).